We begin with the raw amino-acid sequence, 181 residues long: Probable nicotinate-nucleotide adenylyltransferase (181 aa).

The protein belongs to the NadD family.

The enzyme catalyses nicotinate beta-D-ribonucleotide + ATP + H(+) = deamido-NAD(+) + diphosphate. The protein operates within cofactor biosynthesis; NAD(+) biosynthesis; deamido-NAD(+) from nicotinate D-ribonucleotide: step 1/1. In terms of biological role, catalyzes the reversible adenylation of nicotinate mononucleotide (NaMN) to nicotinic acid adenine dinucleotide (NaAD). In Campylobacter jejuni subsp. jejuni serotype O:6 (strain 81116 / NCTC 11828), this protein is Probable nicotinate-nucleotide adenylyltransferase.